The sequence spans 141 residues: Cystatin (141 aa).

The first 26 residues, 1 to 26 (MVHSQLPVAAPLRLLCALLLLPSATM), serve as a signal peptide directing secretion. A Cystatin domain is found at 29-129 (GGLSPRSVTD…CHFQVWSRPW (101 aa)). Residues 73–77 (QVVAG) carry the Secondary area of contact motif. 2 disulfide bridges follow: C91–C107 and C120–C140.

It belongs to the cystatin family. In terms of tissue distribution, expressed at a low level by the venom gland (at protein level).

The protein resides in the secreted. Its function is as follows. Inhibits various C1 cysteine proteases including cathepsin L, papain and cathepsin B. This protein has no toxic activity and its function in the venom is unknown. It may play a role as a housekeeping or regulatory protein. This is Cystatin from Oxyuranus scutellatus scutellatus (Australian taipan).